The sequence spans 314 residues: MAAPLFDCLIVGGGPAGLAAALGLCRAIRTAVVFDSKSYRNPTEHMHNVSTWDHANPHDYRLAARKELTEGRYNTVTLADVALRKIWKLDSGEFEATDAVGKVWKGRKLILATGVKDEIPELPGYADCWPKSIYHCLFCHGFEERGAPSVGVLAIGPVANPKPAEHLSRLAHNLAKTVTIYTNGNEELAAQLRPSIEKDQWLTLDNRVIKQLHKTDGIPVRVELDDGTTKEEGFLVHAMKTTPRLDFEHNLNLELSAQGTEFVASPPFSETTTPGCFATGDCGMAIKAASMSMSNGSLAAVGVVSQLAFDEKAK.

FAD is bound by residues 13–16, 35–40, histidine 47, and alanine 112; these read GGPA and DSKSYR. A disulfide bridge links cysteine 136 with cysteine 139. Residues aspartate 281 and 288 to 289 each bind FAD; that span reads AA.

Belongs to the class-II pyridine nucleotide-disulfide oxidoreductase family. In terms of assembly, homodimer. The cofactor is FAD.

It functions in the pathway mycotoxin biosynthesis. In terms of biological role, thioredoxin reductase; part of the gene cluster that mediates the biosynthesis of aspirochlorine (or antibiotic A30641), an unusual halogenated spiro compound with distinctive antifungal properties due to selective inhibition of protein biosynthesis, and which is also active against bacteria, viruses, and murine tumor cells. The non-ribosomal peptide synthetase (NRPS) aclP is responsible the formation of the diketopiperazine (DKP) core from the condensation of 2 phenylalanine residues. One Phe residue is tailored into chlorotyrosine by hydroxylation and chlorination, whereas the second Phe undergoes an unprecedented C-C bond cleavage to be converted into glycine. After formation of the DKP, sulfur is incorporated into the DKP by conjugation with glutathione by aclG, followed by its stepwise degradation to the thiol by aclI, aclJ and aclK, and the dithiol oxidation by aclT. In addition, oxygenases (aclB, aclC, aclL and aclO) and O-methyltransferases (aclM and aclU) act as tailoring enzymes to produce the intermediate dechloroaspirochlorine. Ultimately, chlorination of dechloroaspirochlorine by the halogenase aclH is the last step in the aspirochlorine pathway. The chain is Thioredoxin reductase aclD from Aspergillus oryzae (strain ATCC 42149 / RIB 40) (Yellow koji mold).